The chain runs to 165 residues: Protein SprT (165 aa).

The SprT-like domain occupies 20-163 (EKLAQANLKL…RCVHCGEQLV (144 aa)). A Zn(2+)-binding site is contributed by His78. The active site involves Glu79. Position 82 (His82) interacts with Zn(2+).

It belongs to the SprT family. The cofactor is Zn(2+).

It is found in the cytoplasm. In Escherichia coli (strain K12 / MC4100 / BW2952), this protein is Protein SprT.